We begin with the raw amino-acid sequence, 177 residues long: Transcription antitermination protein NusB (177 aa).

Residues 1-35 (MTDSANPTPSARPPRQPRTGTTGTGARKAGSKSGR) form a disordered region. The segment covering 17–28 (PRTGTTGTGARK) has biased composition (low complexity).

This sequence belongs to the NusB family.

Involved in transcription antitermination. Required for transcription of ribosomal RNA (rRNA) genes. Binds specifically to the boxA antiterminator sequence of the ribosomal RNA (rrn) operons. This Acidovorax ebreus (strain TPSY) (Diaphorobacter sp. (strain TPSY)) protein is Transcription antitermination protein NusB.